The sequence spans 392 residues: Phosphoglycerate kinase (392 aa).

Residues 21 to 23 (DFN), Arg-36, 59 to 62 (HLGR), Arg-118, and Arg-151 each bind substrate. Residues Lys-201, Gly-292, Glu-323, and 349 to 352 (GGDS) contribute to the ATP site.

It belongs to the phosphoglycerate kinase family. In terms of assembly, monomer.

It is found in the cytoplasm. It catalyses the reaction (2R)-3-phosphoglycerate + ATP = (2R)-3-phospho-glyceroyl phosphate + ADP. The protein operates within carbohydrate degradation; glycolysis; pyruvate from D-glyceraldehyde 3-phosphate: step 2/5. In Borrelia hermsii (strain HS1 / DAH), this protein is Phosphoglycerate kinase.